A 176-amino-acid polypeptide reads, in one-letter code: Ribosome rescue factor SmrB (176 aa).

The Smr domain occupies 93-168 (LDLHGYRQSE…GDAALLVLID (76 aa)).

The protein belongs to the SmrB family. In terms of assembly, associates with collided ribosomes, but not with correctly translating polysomes.

Acts as a ribosome collision sensor. Detects stalled/collided disomes (pairs of ribosomes where the leading ribosome is stalled and a second ribosome has collided with it) and endonucleolytically cleaves mRNA at the 5' boundary of the stalled ribosome. Stalled/collided disomes form a new interface (primarily via the 30S subunits) that binds SmrB. Cleaved mRNA becomes available for tmRNA ligation, leading to ribosomal subunit dissociation and rescue of stalled ribosomes. The polypeptide is Ribosome rescue factor SmrB (Shewanella sp. (strain ANA-3)).